Here is a 645-residue protein sequence, read N- to C-terminus: Threonine--tRNA ligase (645 aa).

The region spanning 1–61 is the TGS domain; it reads MPVITLPDGS…SDDAKLSIIT (61 aa). The catalytic stretch occupies residues 243 to 534; that stretch reads DHRKLGKKLD…LIEDTEGAFP (292 aa). 3 residues coordinate Zn(2+): Cys334, His385, and His511.

Belongs to the class-II aminoacyl-tRNA synthetase family. In terms of assembly, homodimer. It depends on Zn(2+) as a cofactor.

It localises to the cytoplasm. The catalysed reaction is tRNA(Thr) + L-threonine + ATP = L-threonyl-tRNA(Thr) + AMP + diphosphate + H(+). Catalyzes the attachment of threonine to tRNA(Thr) in a two-step reaction: L-threonine is first activated by ATP to form Thr-AMP and then transferred to the acceptor end of tRNA(Thr). Also edits incorrectly charged L-seryl-tRNA(Thr). The polypeptide is Threonine--tRNA ligase (Marinomonas sp. (strain MWYL1)).